Reading from the N-terminus, the 1006-residue chain is Unconventional myosin-Id (1006 aa).

Residue Ala-2 is modified to N-acetylalanine. The Myosin motor domain occupies 9-695 (FGKADFVLMD…TLFTLEELRA (687 aa)). ATP is bound at residue 102–109 (GESGAGKT). A Phosphoserine modification is found at Ser-200. Tyr-536 carries the phosphotyrosine modification. The tract at residues 572–594 (MIALVDNLASKEPYYVRCIKPND) is actin-binding. 2 consecutive IQ domains span residues 699 to 719 (VRVV…MRYK) and 721 to 741 (TKAA…SYIH). The segment at 776–896 (LQSIFNRWRA…MDPTKQYKVM (121 aa)) is interaction with calmodulin. Residues 812 to 1005 (GQRADLGLQR…RSGFILSVPG (194 aa)) form the TH1 domain.

Belongs to the TRAFAC class myosin-kinesin ATPase superfamily. Myosin family. As to quaternary structure, interacts (via the two IQ motifs) with calmodulin. Binds an additional calmodulin chain via a third, C-terminal region. Interacts with F-actin. Detected on tracheal epithelial cells, and on epithelial cells and brush border cells in duodenum, jejunum and ileum. Detected on myelinated white matter in the cerebellum, and the myelinated part of the optic nerve. Detected on mature oligodendrocites. Detected on the outside of the myelin sheet that surrounds axons (at protein level). Ubiquitous. Highest levels in adult brain, and spinal cord. Moderate levels in lung, kidney, liver and spleen. Low levels in testis and heart (at protein level).

It localises to the cytoplasm. It is found in the perikaryon. The protein localises to the cell projection. Its subcellular location is the dendrite. The protein resides in the early endosome. It localises to the cell cortex. Functionally, unconventional myosin that functions as actin-based motor protein with ATPase activity. Plays a role in endosomal protein trafficking, and especially in the transfer of cargo proteins from early to recycling endosomes. Required for normal planar cell polarity in ciliated tracheal cells, for normal rotational polarity of cilia, and for coordinated, unidirectional ciliary movement in the trachea. Required for normal, polarized cilia organization in brain ependymal epithelial cells. The sequence is that of Unconventional myosin-Id (Myo1d) from Rattus norvegicus (Rat).